A 283-amino-acid chain; its full sequence is Digeranylgeranylglyceryl phosphate synthase (283 aa).

8 helical membrane passes run 21–41 (ITASIGGIIGYLISSNFEIDI), 45–65 (LLVFFVVFFVCAYGNVINDIF), 97–117 (LILGLVLSLFINIYALIIAVI), 135–155 (IGNFIIGYLTGSVFLFGGVAG), 158–178 (VMPVVILFLCSLLSIWGREIV), 204–224 (LYFATFLVVLAVILSPLPYIL), 226–246 (IFGIWYLILIAICDILFIYAM), and 261–281 (VSKFLKIIMNIVLLAFIVGAI).

This sequence belongs to the UbiA prenyltransferase family. DGGGP synthase subfamily. Requires Mg(2+) as cofactor.

The protein resides in the cell membrane. It carries out the reaction sn-3-O-(geranylgeranyl)glycerol 1-phosphate + (2E,6E,10E)-geranylgeranyl diphosphate = 2,3-bis-O-(geranylgeranyl)-sn-glycerol 1-phosphate + diphosphate. It participates in membrane lipid metabolism; glycerophospholipid metabolism. In terms of biological role, prenyltransferase that catalyzes the transfer of the geranylgeranyl moiety of geranylgeranyl diphosphate (GGPP) to the C2 hydroxyl of (S)-3-O-geranylgeranylglyceryl phosphate (GGGP). This reaction is the second ether-bond-formation step in the biosynthesis of archaeal membrane lipids. The protein is Digeranylgeranylglyceryl phosphate synthase of Methanocaldococcus jannaschii (strain ATCC 43067 / DSM 2661 / JAL-1 / JCM 10045 / NBRC 100440) (Methanococcus jannaschii).